We begin with the raw amino-acid sequence, 414 residues long: WD repeat-containing protein jip5 (414 aa).

WD repeat units lie at residues 9 to 48 (PLSA…SDTD), 73 to 112 (RHKG…VENK), 118 to 159 (AKDG…SPVS), 222 to 263 (VSSV…DQDE), and 319 to 356 (DETE…DGMD). The tract at residues 39-65 (RLPSEESDTDGDGAESTSSSRNGKGHI) is disordered. The disordered stretch occupies residues 352 to 414 (SDGMDGDMAG…QDIMGFADID (63 aa)). Positions 369–383 (DSDDSDDGDDSDDSD) are enriched in acidic residues.

The protein belongs to the WD repeat WDR55 family.

The protein localises to the nucleus. It localises to the nucleolus. The polypeptide is WD repeat-containing protein jip5 (jip5) (Neosartorya fischeri (strain ATCC 1020 / DSM 3700 / CBS 544.65 / FGSC A1164 / JCM 1740 / NRRL 181 / WB 181) (Aspergillus fischerianus)).